We begin with the raw amino-acid sequence, 338 residues long: Ferrochelatase (338 aa).

Positions 210 and 291 each coordinate Fe cation.

This sequence belongs to the ferrochelatase family.

It localises to the cytoplasm. It catalyses the reaction heme b + 2 H(+) = protoporphyrin IX + Fe(2+). The protein operates within porphyrin-containing compound metabolism; protoheme biosynthesis; protoheme from protoporphyrin-IX: step 1/1. In terms of biological role, catalyzes the ferrous insertion into protoporphyrin IX. This chain is Ferrochelatase, found in Helicobacter acinonychis (strain Sheeba).